An 812-amino-acid chain; its full sequence is ATP-dependent zinc metalloprotease FtsH (812 aa).

Residues 1 to 21 (MPPSPPRPPKFPGSGRPESPN) are Cytoplasmic-facing. The helical transmembrane segment at 22–42 (WGVWVMVLLIVGVLAFGFFTP) threads the bilayer. Residues 43–241 (ESFGLGPRKE…TKFKRESGSW (199 aa)) are Extracellular-facing. The helical transmembrane segment at 242 to 262 (GGILLNLLPIVLILVILFFMF) threads the bilayer. Residues 263–812 (RAQSGGARGA…EFGKDGGEKK (550 aa)) lie on the Cytoplasmic side of the membrane. ATP is bound at residue 333-340 (GAPGTGKT). Histidine 555 serves as a coordination point for Zn(2+). Glutamate 556 is an active-site residue. Residues histidine 559 and aspartate 631 each coordinate Zn(2+). The tract at residues 739–812 (KNPPARVTPP…EFGKDGGEKK (74 aa)) is disordered. Composition is skewed to basic and acidic residues over residues 757-785 (QPGK…RKME) and 803-812 (EFGKDGGEKK).

This sequence in the central section; belongs to the AAA ATPase family. It in the C-terminal section; belongs to the peptidase M41 family. In terms of assembly, homohexamer. The cofactor is Zn(2+).

It localises to the cell membrane. Functionally, acts as a processive, ATP-dependent zinc metallopeptidase for both cytoplasmic and membrane proteins. Plays a role in the quality control of integral membrane proteins. This chain is ATP-dependent zinc metalloprotease FtsH, found in Akkermansia muciniphila (strain ATCC BAA-835 / DSM 22959 / JCM 33894 / BCRC 81048 / CCUG 64013 / CIP 107961 / Muc).